A 182-amino-acid polypeptide reads, in one-letter code: Regulatory protein RecX (182 aa).

The segment at 12 to 54 is disordered; sequence LSQRDHSESELRRKLAAPPFSAKGNWGKRSGAKSSNLVESNPV. Basic and acidic residues predominate over residues 13-24; sequence SQRDHSESELRR. A compositionally biased stretch (polar residues) spans 43–54; that stretch reads AKSSNLVESNPV.

The protein belongs to the RecX family.

It localises to the cytoplasm. In terms of biological role, modulates RecA activity. This Yersinia pseudotuberculosis serotype I (strain IP32953) protein is Regulatory protein RecX.